Here is a 281-residue protein sequence, read N- to C-terminus: tRNA N(3)-cytidine methyltransferase METTL8, mitochondrial (281 aa).

A mitochondrion-targeting transit peptide spans 1–22 (MNVIWRSCICRLRQGKVPHRCQ). Lys-80 participates in a covalent cross-link: Glycyl lysine isopeptide (Lys-Gly) (interchain with G-Cter in SUMO). S-adenosyl-L-methionine-binding residues include Trp-89 and Tyr-93. Over residues 139 to 151 (RTQGTETHCQESF) the composition is skewed to polar residues. Residues 139–180 (RTQGTETHCQESFVSPEPGSRGRSAPDPDLEEYSKGPGKTEP) form a disordered region. S-adenosyl-L-methionine-binding residues include Gly-194, Asp-220, and Asp-246.

This sequence belongs to the methyltransferase superfamily. METL family. As to quaternary structure, interacts with EP300. In terms of tissue distribution, absent in embryonic lung but is induced in a fibroblast cell line by stretch. As to expression, expressed in undifferentiated progenitor cells, while its expression is inhibited by stretch. Absent in undifferentiated embryonic lung mesenchymal cells, but expression is induced by stretch. In terms of tissue distribution, expressed in mature adipose tissue.

It localises to the mitochondrion. The protein localises to the cytoplasm. It is found in the nucleus. The enzyme catalyses cytidine(32) in tRNA(Ser) + S-adenosyl-L-methionine = N(3)-methylcytidine(32) in tRNA(Ser) + S-adenosyl-L-homocysteine + H(+). The catalysed reaction is cytidine(32) in tRNA(Thr) + S-adenosyl-L-methionine = N(3)-methylcytidine(32) in tRNA(Thr) + S-adenosyl-L-homocysteine + H(+). It catalyses the reaction a cytidine in mRNA + S-adenosyl-L-methionine = an N(3)-methylcytidine in mRNA + S-adenosyl-L-homocysteine + H(+). Its function is as follows. Mitochondrial S-adenosyl-L-methionine-dependent methyltransferase that mediates N(3)-methylcytidine modification of residue 32 of the tRNA anticodon loop of mitochondrial tRNA(Ser)(UCN) and tRNA(Thr). N(3)-methylcytidine methylation modification regulates mitochondrial translation efficiency and is required for activity of the respiratory chain. N(3)-methylcytidine methylation of mitochondrial tRNA(Ser)(UCN) requires the formation of N(6)-dimethylallyladenosine(37) (i6A37) by TRIT1 as prerequisite. May also mediate N(3)-methylcytidine modification of mRNAs. The existence of N(3)-methylcytidine modification on mRNAs is however unclear, and additional evidences are required to confirm the role of the N(3)-methylcytidine-specific mRNA methyltransferase activity of METTL8 in vivo. Functionally, overexpression in lung progenitor cells stimulates smooth muscle-specific gene expression and suppresses adipogenic gene expression. Stimulates adipogenesis. This Mus musculus (Mouse) protein is tRNA N(3)-cytidine methyltransferase METTL8, mitochondrial.